A 418-amino-acid polypeptide reads, in one-letter code: MSIAMRLKVMSFLQYFIWGSWLVTLGSYMINTLHFTGANVGMVYSSKGIAAIIMPGIMGIIADKWLRAERAYMLCHLVCAGVLFYAASVTDPDMMFWVMLVNAMAFMPTIALSNSVSYSCLAQAGLDPVTAFPPIRVFGTVGFIVAMWAVSLLHLELSSLQLYIASGASLLLSAYALTLPKIPVAEKKATTSLASKLGLDAFVLFKNPRMAIFFLFAMMLGAVLQITNVFGNPFLHDFARNPEFADSFVVKYPSILLSVSQMAEVGFILTIPFFLKRFGIKTVMLMSMVAWTLRFGFFAYGDPSTTGFILLLLSMIVYGCAFDFFNISGSVFVEQEVDSSIRASAQGLFMTMVNGVGAWVGSILSGMAVDYFSVDGVKDWQTIWLVFAGYALFLAVIFFFGFKYNHDPEKIKHRAVTH.

Residues 1–9 (MSIAMRLKV) are Cytoplasmic-facing. The chain crosses the membrane as a helical span at residues 10-30 (MSFLQYFIWGSWLVTLGSYMI). Over 31–41 (NTLHFTGANVG) the chain is Periplasmic. The chain crosses the membrane as a helical span at residues 42 to 62 (MVYSSKGIAAIIMPGIMGIIA). Residues 63–70 (DKWLRAER) are Cytoplasmic-facing. A run of 2 helical transmembrane segments spans residues 71-91 (AYML…SVTD) and 92-112 (PDMM…TIAL). The Cytoplasmic segment spans residues 113–136 (SNSVSYSCLAQAGLDPVTAFPPIR). A helical transmembrane segment spans residues 137 to 157 (VFGTVGFIVAMWAVSLLHLEL). Residues 158–159 (SS) lie on the Periplasmic side of the membrane. The helical transmembrane segment at 160–180 (LQLYIASGASLLLSAYALTLP) threads the bilayer. The Cytoplasmic segment spans residues 181–209 (KIPVAEKKATTSLASKLGLDAFVLFKNPR). A helical transmembrane segment spans residues 210–230 (MAIFFLFAMMLGAVLQITNVF). At 231–254 (GNPFLHDFARNPEFADSFVVKYPS) the chain is on the periplasmic side. The helical transmembrane segment at 255-275 (ILLSVSQMAEVGFILTIPFFL) threads the bilayer. Residues 276–277 (KR) are Cytoplasmic-facing. The chain crosses the membrane as a helical span at residues 278-298 (FGIKTVMLMSMVAWTLRFGFF). Topologically, residues 299–306 (AYGDPSTT) are periplasmic. Residues 307–327 (GFILLLLSMIVYGCAFDFFNI) form a helical membrane-spanning segment. At 328–348 (SGSVFVEQEVDSSIRASAQGL) the chain is on the cytoplasmic side. The chain crosses the membrane as a helical span at residues 349 to 369 (FMTMVNGVGAWVGSILSGMAV). At 370–381 (DYFSVDGVKDWQ) the chain is on the periplasmic side. A helical membrane pass occupies residues 382-402 (TIWLVFAGYALFLAVIFFFGF). The Cytoplasmic segment spans residues 403-418 (KYNHDPEKIKHRAVTH).

The protein belongs to the major facilitator superfamily. Nucleoside:H(+) symporter (NHS) (TC 2.A.1.10) family.

It localises to the cell inner membrane. The catalysed reaction is xanthosine(in) + H(+)(in) = xanthosine(out) + H(+)(out). With respect to regulation, transport is abolished by the proton uncoupler 2,4-dinitrophenol. In terms of biological role, uptake of xanthosine. Can also transport other nucleosides such as inosine, adenosine, cytidine, uridine and thymidine. Transport is driven by a proton motive force. This Escherichia coli (strain K12) protein is Xanthosine permease.